The sequence spans 326 residues: Nine-heme cytochrome c (326 aa).

An N-terminal signal peptide occupies residues 1–30; that stretch reads MRNGTSLLLLAAIALAGAACLTAMGGTAKA. The heme site is built by H67, H70, C77, C80, H81, H82, C89, C92, H93, H111, C127, C130, H131, C141, C144, H145, C157, C160, H161, H227, H230, H248, C255, C258, H259, H260, C271, C274, H275, H294, C297, C300, H301, C314, C317, and H318.

As to quaternary structure, monomer. Post-translationally, binds 9 heme groups per subunit.

The protein resides in the periplasm. In terms of biological role, may form part of a transmembrane redox complex through which electrons are transferred to the cytoplasm for reduction of sulfate. The chain is Nine-heme cytochrome c from Desulfovibrio desulfuricans (strain ATCC 27774 / DSM 6949 / MB).